We begin with the raw amino-acid sequence, 769 residues long: Serine protease HtrA-like (769 aa).

Residues 1–20 (MDIGKKHVIPKSQYRRKRRE) are compositionally biased toward basic residues. Positions 1 to 390 (MDIGKKHVIP…ATSKLNKGRA (390 aa)) are disordered. Basic and acidic residues-rich tracts occupy residues 21 to 64 (FFHN…ERFK) and 71 to 108 (LEQRNRDVNENKAEESKSNQDSKSAYNRDHYLTDDVSK). Polar residues predominate over residues 126–137 (YEQNSEATLSTK). A compositionally biased stretch (basic and acidic residues) spans 138–186 (STDKVESTEMRKLSSDKNKVGHEEQHVLSKPSEHDKETRIDSESSRTDS). Polar residues predominate over residues 247 to 262 (QQSQNEQTKTYTYGDS). 2 stretches are compositionally biased toward basic and acidic residues: residues 264 to 296 (QNDKSNHENDLSHHIPSISDDKDNVMRENHIVD) and 310 to 330 (KTDDDRKLDEKIHVEDKHKQN). Residues 331 to 347 (ADSSETVGYQSQSTASH) are compositionally biased toward polar residues. The segment covering 348–364 (RSTEKRNISINDHDKLN) has biased composition (basic and acidic residues). Over residues 365 to 390 (GQKTNTKTSANNNQKKATSKLNKGRA) the composition is skewed to polar residues. Residues 410 to 430 (LVILMGIIILIVILNAIFNNV) traverse the membrane as a helical segment. Catalysis depends on charge relay system residues His504, Asp534, and Ser619. The 54-residue stretch at 680–733 (IVSLNSFERQAVKLPGKVKNGVVVDQVDNNGLADQSGLKKGDVITELDGKLLED) folds into the PDZ domain.

This sequence belongs to the peptidase S1C family.

It is found in the cell membrane. The protein is Serine protease HtrA-like of Staphylococcus aureus (strain NCTC 8325 / PS 47).